A 303-amino-acid chain; its full sequence is Succinate--CoA ligase [ADP-forming] subunit alpha (303 aa).

Residues Thr-20–Glu-23, Lys-46, and Ile-108–Glu-110 each bind CoA. Residue Tyr-173 participates in substrate binding. Residue His-259 is the Tele-phosphohistidine intermediate of the active site.

This sequence belongs to the succinate/malate CoA ligase alpha subunit family. Heterotetramer of two alpha and two beta subunits.

The enzyme catalyses succinate + ATP + CoA = succinyl-CoA + ADP + phosphate. It catalyses the reaction GTP + succinate + CoA = succinyl-CoA + GDP + phosphate. Its pathway is carbohydrate metabolism; tricarboxylic acid cycle; succinate from succinyl-CoA (ligase route): step 1/1. Functionally, succinyl-CoA synthetase functions in the citric acid cycle (TCA), coupling the hydrolysis of succinyl-CoA to the synthesis of either ATP or GTP and thus represents the only step of substrate-level phosphorylation in the TCA. The alpha subunit of the enzyme binds the substrates coenzyme A and phosphate, while succinate binding and nucleotide specificity is provided by the beta subunit. This chain is Succinate--CoA ligase [ADP-forming] subunit alpha, found in Mycobacterium bovis (strain ATCC BAA-935 / AF2122/97).